Consider the following 403-residue polypeptide: Phosphoglycerate kinase (403 aa).

Residues 22–24, R37, 60–63, R119, and R156 contribute to the substrate site; these read DLN and HLGR. Residues K206, G302, E333, and 359–362 contribute to the ATP site; that span reads GGDS.

It belongs to the phosphoglycerate kinase family. As to quaternary structure, monomer.

Its subcellular location is the cytoplasm. It catalyses the reaction (2R)-3-phosphoglycerate + ATP = (2R)-3-phospho-glyceroyl phosphate + ADP. Its pathway is carbohydrate degradation; glycolysis; pyruvate from D-glyceraldehyde 3-phosphate: step 2/5. This is Phosphoglycerate kinase from Streptomyces avermitilis (strain ATCC 31267 / DSM 46492 / JCM 5070 / NBRC 14893 / NCIMB 12804 / NRRL 8165 / MA-4680).